The sequence spans 151 residues: SsrA-binding protein (151 aa).

The protein belongs to the SmpB family.

The protein localises to the cytoplasm. Its function is as follows. Required for rescue of stalled ribosomes mediated by trans-translation. Binds to transfer-messenger RNA (tmRNA), required for stable association of tmRNA with ribosomes. tmRNA and SmpB together mimic tRNA shape, replacing the anticodon stem-loop with SmpB. tmRNA is encoded by the ssrA gene; the 2 termini fold to resemble tRNA(Ala) and it encodes a 'tag peptide', a short internal open reading frame. During trans-translation Ala-aminoacylated tmRNA acts like a tRNA, entering the A-site of stalled ribosomes, displacing the stalled mRNA. The ribosome then switches to translate the ORF on the tmRNA; the nascent peptide is terminated with the 'tag peptide' encoded by the tmRNA and targeted for degradation. The ribosome is freed to recommence translation, which seems to be the essential function of trans-translation. The chain is SsrA-binding protein from Lactobacillus acidophilus (strain ATCC 700396 / NCK56 / N2 / NCFM).